Reading from the N-terminus, the 283-residue chain is Phosphatidylglycerol--prolipoprotein diacylglyceryl transferase (283 aa).

The next 4 helical transmembrane spans lie at 17-37 (LAVR…TFLG), 56-76 (FLTW…VLFY), 92-112 (WEGG…IWLF), and 117-137 (GIGF…GLAS). Arg139 contacts a 1,2-diacyl-sn-glycero-3-phospho-(1'-sn-glycerol). 3 consecutive transmembrane segments (helical) span residues 194–214 (PSQL…VWLF), 222–242 (GQVA…AEFA), and 255–275 (GLSM…VGFV).

This sequence belongs to the Lgt family.

It localises to the cell inner membrane. It catalyses the reaction L-cysteinyl-[prolipoprotein] + a 1,2-diacyl-sn-glycero-3-phospho-(1'-sn-glycerol) = an S-1,2-diacyl-sn-glyceryl-L-cysteinyl-[prolipoprotein] + sn-glycerol 1-phosphate + H(+). It functions in the pathway protein modification; lipoprotein biosynthesis (diacylglyceryl transfer). Catalyzes the transfer of the diacylglyceryl group from phosphatidylglycerol to the sulfhydryl group of the N-terminal cysteine of a prolipoprotein, the first step in the formation of mature lipoproteins. The polypeptide is Phosphatidylglycerol--prolipoprotein diacylglyceryl transferase (Neisseria meningitidis serogroup A / serotype 4A (strain DSM 15465 / Z2491)).